The primary structure comprises 316 residues: MSNKLAQLRKLTTVVADTGEIDAIKKYQPEDATTNPSLILKAAQIAEYAPLIDQAIAYAKTQSNDKAQQVQDTCDMLAVNIGKEILKTIPGRISTEVDARLSYDTERSVAKARQLVKMYNDAGISNDRILIKLASTWEGIRAAEILEKEGINCNLTLLFSFAQARACAEAGVFLISPFVGRIMDWYKAKEGRDFAASEDPGVLSVTKIYNYYKEHGYKTVVMGASFRNIGEILELAGCDRLTIAPSLLAELEAAEGELVAKLVDSKGSKARPAPMTHSEFLWEHNLDAMAVEKLAEGIRNFAVDQGKLEAMIAAKL.

The active-site Schiff-base intermediate with substrate is K132.

This sequence belongs to the transaldolase family. Type 1 subfamily.

It localises to the cytoplasm. The catalysed reaction is D-sedoheptulose 7-phosphate + D-glyceraldehyde 3-phosphate = D-erythrose 4-phosphate + beta-D-fructose 6-phosphate. The protein operates within carbohydrate degradation; pentose phosphate pathway; D-glyceraldehyde 3-phosphate and beta-D-fructose 6-phosphate from D-ribose 5-phosphate and D-xylulose 5-phosphate (non-oxidative stage): step 2/3. Transaldolase is important for the balance of metabolites in the pentose-phosphate pathway. The sequence is that of Transaldolase from Vibrio cholerae serotype O1 (strain ATCC 39315 / El Tor Inaba N16961).